Here is an 858-residue protein sequence, read N- to C-terminus: DNA mismatch repair protein MutS (858 aa).

613 to 620 serves as a coordination point for ATP; it reads GPNMAGKS.

The protein belongs to the DNA mismatch repair MutS family.

This protein is involved in the repair of mismatches in DNA. It is possible that it carries out the mismatch recognition step. This protein has a weak ATPase activity. This chain is DNA mismatch repair protein MutS, found in Dehalococcoides mccartyi (strain CBDB1).